Consider the following 177-residue polypeptide: Large ribosomal subunit protein uL6 (177 aa).

This sequence belongs to the universal ribosomal protein uL6 family. As to quaternary structure, part of the 50S ribosomal subunit.

Its function is as follows. This protein binds to the 23S rRNA, and is important in its secondary structure. It is located near the subunit interface in the base of the L7/L12 stalk, and near the tRNA binding site of the peptidyltransferase center. In Novosphingobium aromaticivorans (strain ATCC 700278 / DSM 12444 / CCUG 56034 / CIP 105152 / NBRC 16084 / F199), this protein is Large ribosomal subunit protein uL6.